Here is a 312-residue protein sequence, read N- to C-terminus: Ribosomal RNA small subunit methyltransferase H (312 aa).

S-adenosyl-L-methionine contacts are provided by residues A33 to H35, D53, F79, D100, and Q107.

The protein belongs to the methyltransferase superfamily. RsmH family.

It localises to the cytoplasm. It carries out the reaction cytidine(1402) in 16S rRNA + S-adenosyl-L-methionine = N(4)-methylcytidine(1402) in 16S rRNA + S-adenosyl-L-homocysteine + H(+). In terms of biological role, specifically methylates the N4 position of cytidine in position 1402 (C1402) of 16S rRNA. This Clostridium acetobutylicum (strain ATCC 824 / DSM 792 / JCM 1419 / IAM 19013 / LMG 5710 / NBRC 13948 / NRRL B-527 / VKM B-1787 / 2291 / W) protein is Ribosomal RNA small subunit methyltransferase H.